A 418-amino-acid polypeptide reads, in one-letter code: Hydroxysqualene dehydroxylase (418 aa).

The protein belongs to the HpnE family.

It catalyses the reaction squalene + FAD + H2O + H(+) = hydroxysqualene + FADH2. It participates in secondary metabolite biosynthesis; hopanoid biosynthesis. Involved in the biosynthesis of the hopanoid precursor squalene (SQ) from farnesyl diphosphate (FPP). Catalyzes the third (last) step, the reduction of hydroxysqualene (HSQ) to SQ. This is Hydroxysqualene dehydroxylase from Rhodopseudomonas palustris (strain ATCC BAA-98 / CGA009).